Consider the following 1840-residue polypeptide: Collagen alpha-1(V) chain (1840 aa).

An N-terminal signal peptide occupies residues 1 to 30 (MDVHTRWKAPRPGAPLLSSPLLLLLLLLWA). The Laminin G-like domain maps to 72–244 (DVAYRVSKDA…DYCEHYSPDC (173 aa)). Residues 231–445 (RAAYDYCEHY…MPANQDTIYE (215 aa)) form a nonhelical region region. Residues Tyr234, Tyr236, Tyr240, Tyr262, Tyr263, Tyr336, Tyr338, and Tyr344 each carry the sulfotyrosine modification. 2 disordered regions span residues 241 to 547 (SPDC…QESQ) and 561 to 1576 (GPAG…EVIQ). Residues 258-268 (NPDEYYPEGEG) show a composition bias toward acidic residues. Composition is skewed to low complexity over residues 335–352 (DYDYVPTDDYYTTSPYED), 375–387 (PTSTSVTSNSSNP), and 462–471 (IIEPGMLIEG). The tract at residues 446–560 (GIGGPRGEKG…ILQQARLALR (115 aa)) is interrupted collagenous region. A compositionally biased stretch (pro residues) spans 472-487 (PPGPEGPAGLPGPPGT). 2 stretches are compositionally biased toward low complexity: residues 508-525 (LPGADGLPGPPGTMLMLP) and 561-572 (GPAGPMGLTGRP). The triple-helical region stretch occupies residues 561-1572 (GPAGPMGLTG…GLPGPPGPPG (1012 aa)). 3 positions are modified to 4-hydroxyproline: Pro572, Pro578, and Pro623. Lys629 is modified (5-hydroxylysine). Position 641 is a 4-hydroxyproline (Pro641). 5-hydroxylysine is present on Lys644. Pro650, Pro656, Pro659, Pro677, and Pro680 each carry 4-hydroxyproline. Residues 673 to 688 (PRGLPGEPGPRGLLGP) show a composition bias toward low complexity. 2 positions are modified to 3-hydroxyproline: Pro682 and Pro688. Pro residues predominate over residues 689 to 698 (KGPPGPPGPP). Residues Pro692, Pro698, and Pro707 each carry the 4-hydroxyproline modification. Residue Lys710 is modified to 5-hydroxylysine. Residues Pro719, Pro722, Pro728, and Pro734 each carry the 4-hydroxyproline modification. Positions 724–743 (QQGNPGAQGLPGPQGAIGPP) are enriched in low complexity. Lys746 bears the 5-hydroxylysine mark. Positions 749–758 (LGKPGLPGMP) are enriched in low complexity. Residues Pro752, Pro758, Pro764, Pro767, and Pro773 each carry the 4-hydroxyproline modification. The residue at position 776 (Lys776) is a 5-hydroxylysine. 4-hydroxyproline occurs at positions 782 and 791. 5-hydroxylysine is present on residues Lys797, Lys806, Lys809, and Lys812. Pro818 carries the post-translational modification 4-hydroxyproline. Residue Lys821 is modified to 5-hydroxylysine. 4-hydroxyproline is present on Pro836. The segment covering 839–848 (RGEDGPEGPK) has biased composition (basic and acidic residues). 5-hydroxylysine occurs at positions 848 and 866. 3 positions are modified to 4-hydroxyproline: Pro872, Pro875, and Pro878. A 5-hydroxylysine modification is found at Lys884. 2 positions are modified to 4-hydroxyproline: Pro890 and Pro893. At Lys899 the chain carries 5-hydroxylysine. 4-hydroxyproline is present on residues Pro905 and Pro908. A compositionally biased stretch (low complexity) spans 910-919 (PRGQRGPTGP). Residues Pro932 and Pro947 each carry the 4-hydroxyproline modification. Composition is skewed to low complexity over residues 973–992 (KDGLPGHPGQRGETGFQGKT) and 1001–1013 (VGPQGPTGETGPM). 4-hydroxyproline is present on residues Pro1019, Pro1022, Pro1025, and Pro1031. Over residues 1090-1106 (SPGERGPAGAAGPIGIP) the composition is skewed to low complexity. The segment covering 1108–1117 (RPGPQGPPGP) has biased composition (pro residues). Residues Pro1223 and Pro1226 each carry the 4-hydroxyproline modification. The segment covering 1261 to 1270 (PSGAPGADGP) has biased composition (low complexity). Residues 1296–1305 (GLPGEGGPLG) are compositionally biased toward gly residues. Composition is skewed to pro residues over residues 1382–1400 (TGEPGPSGPPGKRGPPGPA) and 1456–1471 (SPGPDGPPGPMGPPGL). A 4-hydroxyproline mark is found at Pro1469 and Pro1472. A compositionally biased stretch (low complexity) spans 1487 to 1496 (PGLIGLIGPP). The span at 1528–1543 (PLGPPGPPGLPGPPGP) shows a compositional bias: pro residues. Residues 1544–1556 (KGAKGSSGPTGPK) are compositionally biased toward low complexity. Positions 1573 to 1607 (EVIQPLPIQASRTRRNIDASQLLDDGAGESYVDYA) are nonhelical region. Sulfotyrosine occurs at positions 1603 and 1606. A Fibrillar collagen NC1 domain is found at 1611-1839 (EEIFGSLNSL…GFEVGPACFL (229 aa)).

The protein belongs to the fibrillar collagen family. As to quaternary structure, trimers of two alpha 1(V) and one alpha 2(V) chains in most tissues and trimers of one alpha 1(V), one alpha 2(V), and one alpha 3(V) chains in placenta. Interacts with CSPG4. In terms of processing, prolines at the third position of the tripeptide repeating unit (G-X-Y) are hydroxylated in some or all of the chains. Post-translationally, sulfated on 40% of tyrosines. Hydroxylation on proline residues within the sequence motif, GXPG, is most likely to be 4-hydroxy as this fits the requirement for 4-hydroxylation in vertebrates. In terms of tissue distribution, a high molecular weight form was detected in Schwann cells and peripheral nerve. A lower, probably processed form, is detected in all other tissues tested (at protein level).

The protein resides in the secreted. The protein localises to the extracellular space. It localises to the extracellular matrix. In terms of biological role, type V collagen is a member of group I collagen (fibrillar forming collagen). It is a minor connective tissue component of nearly ubiquitous distribution. Type V collagen binds to DNA, heparan sulfate, thrombospondin, heparin, and insulin. The polypeptide is Collagen alpha-1(V) chain (Col5a1) (Rattus norvegicus (Rat)).